A 115-amino-acid chain; its full sequence is Holo-[acyl-carrier-protein] synthase (115 aa).

Positions 8 and 50 each coordinate Mg(2+).

Belongs to the P-Pant transferase superfamily. AcpS family. It depends on Mg(2+) as a cofactor.

It is found in the cytoplasm. The catalysed reaction is apo-[ACP] + CoA = holo-[ACP] + adenosine 3',5'-bisphosphate + H(+). Transfers the 4'-phosphopantetheine moiety from coenzyme A to a Ser of acyl-carrier-protein. This is Holo-[acyl-carrier-protein] synthase from Cutibacterium acnes (strain DSM 16379 / KPA171202) (Propionibacterium acnes).